Here is a 198-residue protein sequence, read N- to C-terminus: 3-isopropylmalate dehydratase small subunit (198 aa).

This sequence belongs to the LeuD family. LeuD type 1 subfamily. Heterodimer of LeuC and LeuD.

It catalyses the reaction (2R,3S)-3-isopropylmalate = (2S)-2-isopropylmalate. It participates in amino-acid biosynthesis; L-leucine biosynthesis; L-leucine from 3-methyl-2-oxobutanoate: step 2/4. In terms of biological role, catalyzes the isomerization between 2-isopropylmalate and 3-isopropylmalate, via the formation of 2-isopropylmaleate. In Mycobacterium marinum (strain ATCC BAA-535 / M), this protein is 3-isopropylmalate dehydratase small subunit.